Reading from the N-terminus, the 57-residue chain is Protein new-glue 4 (57 aa).

The first 16 residues, 1 to 16, serve as a signal peptide directing secretion; that stretch reads MEWKLLLIVLPWLLVC.

Its subcellular location is the secreted. This Drosophila melanogaster (Fruit fly) protein is Protein new-glue 4 (ng4).